Here is a 460-residue protein sequence, read N- to C-terminus: Nitrogenase iron-iron protein beta chain (460 aa).

Residues cysteine 20, cysteine 45, cysteine 104, and serine 143 each contribute to the [8Fe-7S] cluster site.

This sequence belongs to the NifD/NifK/NifE/NifN family. In terms of assembly, hexamer of two alpha, two beta, and two delta chains. The cofactor is [8Fe-7S] cluster.

It catalyses the reaction N2 + 8 reduced [2Fe-2S]-[ferredoxin] + 16 ATP + 16 H2O = H2 + 8 oxidized [2Fe-2S]-[ferredoxin] + 2 NH4(+) + 16 ADP + 16 phosphate + 6 H(+). Its function is as follows. This iron-iron protein is part of the nitrogenase complex that catalyzes the key enzymatic reactions in nitrogen fixation. Other nitrogenase complexes utilize a molybdenum-iron protein or a vanadium-iron protein. The protein is Nitrogenase iron-iron protein beta chain (anfK) of Rhodobacter capsulatus (Rhodopseudomonas capsulata).